Reading from the N-terminus, the 196-residue chain is 3-isopropylmalate dehydratase small subunit (196 aa).

It belongs to the LeuD family. LeuD type 1 subfamily. As to quaternary structure, heterodimer of LeuC and LeuD.

The enzyme catalyses (2R,3S)-3-isopropylmalate = (2S)-2-isopropylmalate. Its pathway is amino-acid biosynthesis; L-leucine biosynthesis; L-leucine from 3-methyl-2-oxobutanoate: step 2/4. In terms of biological role, catalyzes the isomerization between 2-isopropylmalate and 3-isopropylmalate, via the formation of 2-isopropylmaleate. The sequence is that of 3-isopropylmalate dehydratase small subunit from Corynebacterium aurimucosum (strain ATCC 700975 / DSM 44827 / CIP 107346 / CN-1) (Corynebacterium nigricans).